Consider the following 301-residue polypeptide: Ethylmalonyl-CoA decarboxylase (301 aa).

At Lys-211 the chain carries N6-acetyllysine; alternate. N6-succinyllysine; alternate is present on Lys-211. At Lys-295 the chain carries N6-succinyllysine.

The protein belongs to the enoyl-CoA hydratase/isomerase family.

Its subcellular location is the cytoplasm. It localises to the cytosol. The catalysed reaction is (2S)-ethylmalonyl-CoA + H(+) = butanoyl-CoA + CO2. The enzyme catalyses (S)-methylmalonyl-CoA + H(+) = propanoyl-CoA + CO2. It carries out the reaction (2R)-ethylmalonyl-CoA + H(+) = butanoyl-CoA + CO2. Its function is as follows. Decarboxylates ethylmalonyl-CoA, a potentially toxic metabolite, to form butyryl-CoA, suggesting it might be involved in metabolite proofreading. Acts preferentially on (S)-ethylmalonyl-CoA but also has some activity on the (R)-isomer. Also has methylmalonyl-CoA decarboxylase activity at lower level. This Pongo abelii (Sumatran orangutan) protein is Ethylmalonyl-CoA decarboxylase (ECHDC1).